The following is a 138-amino-acid chain: MQLPPFDMWKDYFNLSQVVWALIASRGQRLETQEIEEPSPGPPLGQDQGLGAPGANGGLGTLCNFCKHNGESRHVYSSHQLKTPDGVVVCPILRHYVCPVCGATGDQAHTLKYCPLNGGQQSLYRRSGRNSAGRRVKR.

The segment at 31 to 55 (ETQEIEEPSPGPPLGQDQGLGAPGA) is disordered. The segment at 62 to 116 (LCNFCKHNGESRHVYSSHQLKTPDGVVVCPILRHYVCPVCGATGDQAHTLKYCPL) adopts a Nanos-type zinc-finger fold. The Zn(2+) site is built by Cys-63, Cys-66, His-79, Cys-90, Cys-98, Cys-101, His-109, and Cys-114. 2 short sequence motifs (C2HC) span residues 63 to 90 (CNFCKHNGESRHVYSSHQLKTPDGVVVC) and 98 to 114 (CPVCGATGDQAHTLKYC).

Belongs to the nanos family. As to quaternary structure, interacts with CNOT1, CNOT3, CNOT6L, CNOT7 and CNOT9. Testis and ovary. Expression found in several spermatogenic stages: in cells on the periphery of the tubules which could correspond to spermatogonia, in spermatocytes and in round spermatids (at protein level).

It localises to the cytoplasm. It is found in the P-body. Its subcellular location is the perinuclear region. In terms of biological role, plays a key role in the sexual differentiation of germ cells by promoting the male fate but suppressing the female fate. Represses the female fate pathways by suppressing meiosis, which in turn results in the promotion of the male fate. Maintains the suppression of meiosis by preventing STRA8 expression, which is required for premeiotic DNA replication, after CYP26B1 is decreased. Regulates the localization of the CCR4-NOT deadenylation complex to P-bodies and plays a role in recruiting the complex to trigger the degradation of mRNAs involved in meiosis. Required for the maintenance of the spermatogonial stem cell population. Not essential for the assembly of P-bodies but is required for the maintenance of their normal state. The sequence is that of Nanos homolog 2 (NANOS2) from Homo sapiens (Human).